A 184-amino-acid polypeptide reads, in one-letter code: Photosystem I assembly protein Ycf4 (184 aa).

2 helical membrane-spanning segments follow: residues 19-39 and 64-84; these read ISNF…VLVG and LVMS…WCTI.

This sequence belongs to the Ycf4 family.

The protein resides in the plastid. The protein localises to the chloroplast thylakoid membrane. Its function is as follows. Seems to be required for the assembly of the photosystem I complex. The polypeptide is Photosystem I assembly protein Ycf4 (Oenothera elata subsp. hookeri (Hooker's evening primrose)).